A 126-amino-acid polypeptide reads, in one-letter code: Histone H2B type 1-K (126 aa).

The segment covering 1 to 12 (MPEPAKSAPAPK) has biased composition (low complexity). Residues 1–36 (MPEPAKSAPAPKKGSKKAVTKAQKKDGKKRKRSRKE) are disordered. Pro-2 is modified (N-acetylproline). The residue at position 3 (Glu-3) is an ADP-ribosyl glutamic acid. Position 6 is an N6-(2-hydroxyisobutyryl)lysine; alternate (Lys-6). The residue at position 6 (Lys-6) is an N6-(beta-hydroxybutyryl)lysine; alternate. Residue Lys-6 is modified to N6-acetyllysine; alternate. Lys-6 carries the N6-butyryllysine; alternate modification. At Lys-6 the chain carries N6-crotonyllysine; alternate. Lys-6 is modified (N6-lactoyllysine; alternate). Residue Lys-6 forms a Glycyl lysine isopeptide (Lys-Gly) (interchain with G-Cter in SUMO2); alternate linkage. Ser-7 is subject to ADP-ribosylserine. Position 12 is an N6-(beta-hydroxybutyryl)lysine; alternate (Lys-12). 2 positions are modified to N6-acetyllysine; alternate: Lys-12 and Lys-13. N6-crotonyllysine; alternate occurs at positions 12 and 13. The residue at position 12 (Lys-12) is an N6-lactoyllysine; alternate. Lys-13 is modified (N6-(2-hydroxyisobutyryl)lysine; alternate). A Phosphoserine; by STK4/MST1 modification is found at Ser-15. Lys-16, Lys-17, Lys-21, and Lys-24 each carry N6-acetyllysine; alternate. N6-crotonyllysine; alternate is present on residues Lys-16, Lys-17, Lys-21, and Lys-24. An N6-lactoyllysine; alternate mark is found at Lys-16, Lys-17, Lys-21, and Lys-24. N6-glutaryllysine; alternate is present on Lys-17. 2 positions are modified to N6-(2-hydroxyisobutyryl)lysine; alternate: Lys-21 and Lys-24. Lys-21 is subject to N6-(beta-hydroxybutyryl)lysine; alternate. Lys-21 is modified (N6-butyryllysine; alternate). Residue Lys-21 forms a Glycyl lysine isopeptide (Lys-Gly) (interchain with G-Cter in SUMO2); alternate linkage. Position 25 is an N6-(2-hydroxyisobutyryl)lysine (Lys-25). Position 35 is an N6-(2-hydroxyisobutyryl)lysine; alternate (Lys-35). Lys-35 carries the N6-(beta-hydroxybutyryl)lysine; alternate modification. Lys-35 carries the N6-crotonyllysine; alternate modification. Lys-35 bears the N6-glutaryllysine; alternate mark. The residue at position 35 (Lys-35) is an N6-succinyllysine; alternate. Lys-35 is covalently cross-linked (Glycyl lysine isopeptide (Lys-Gly) (interchain with G-Cter in ubiquitin); alternate). At Glu-36 the chain carries PolyADP-ribosyl glutamic acid. Ser-37 is subject to Phosphoserine; by AMPK. 3 positions are modified to N6-(2-hydroxyisobutyryl)lysine; alternate: Lys-44, Lys-47, and Lys-58. An N6-lactoyllysine; alternate modification is found at Lys-44. Lys-44 and Lys-47 each carry N6-glutaryllysine; alternate. The residue at position 47 (Lys-47) is an N6-methyllysine; alternate. Lys-58 carries the N6,N6-dimethyllysine; alternate modification. Position 80 is a dimethylated arginine (Arg-80). Lys-86 bears the N6-(2-hydroxyisobutyryl)lysine; alternate mark. Lys-86 is subject to N6-acetyllysine; alternate. The residue at position 86 (Lys-86) is an N6-lactoyllysine; alternate. N6,N6,N6-trimethyllysine; alternate is present on Lys-86. Omega-N-methylarginine occurs at positions 87 and 93. Lys-109 carries the post-translational modification N6-(2-hydroxyisobutyryl)lysine; alternate. N6-lactoyllysine; alternate is present on Lys-109. N6-glutaryllysine; alternate is present on Lys-109. At Lys-109 the chain carries N6-methyllysine; alternate. The O-linked (GlcNAc) serine glycan is linked to Ser-113. Thr-116 bears the Phosphothreonine mark. N6-(2-hydroxyisobutyryl)lysine; alternate is present on residues Lys-117 and Lys-121. Lys-117 carries the post-translational modification N6-(beta-hydroxybutyryl)lysine; alternate. N6-lactoyllysine; alternate occurs at positions 117 and 121. N6-glutaryllysine; alternate is present on residues Lys-117 and Lys-121. An N6-succinyllysine; alternate mark is found at Lys-117 and Lys-121. Lys-117 is modified (N6-methylated lysine; alternate). Residue Lys-121 forms a Glycyl lysine isopeptide (Lys-Gly) (interchain with G-Cter in ubiquitin); alternate linkage.

This sequence belongs to the histone H2B family. In terms of assembly, the nucleosome is a histone octamer containing two molecules each of H2A, H2B, H3 and H4 assembled in one H3-H4 heterotetramer and two H2A-H2B heterodimers. The octamer wraps approximately 147 bp of DNA. Monoubiquitination at Lys-35 (H2BK34Ub) by the MSL1/MSL2 dimer is required for histone H3 'Lys-4' (H3K4me) and 'Lys-79' (H3K79me) methylation and transcription activation at specific gene loci, such as HOXA9 and MEIS1 loci. Similarly, monoubiquitination at Lys-121 (H2BK120Ub) by the RNF20/40 complex gives a specific tag for epigenetic transcriptional activation and is also prerequisite for histone H3 'Lys-4' and 'Lys-79' methylation. It also functions cooperatively with the FACT dimer to stimulate elongation by RNA polymerase II. H2BK120Ub also acts as a regulator of mRNA splicing: deubiquitination by USP49 is required for efficient cotranscriptional splicing of a large set of exons. Post-translationally, phosphorylated on Ser-15 (H2BS14ph) by STK4/MST1 during apoptosis; which facilitates apoptotic chromatin condensation. Also phosphorylated on Ser-15 in response to DNA double strand breaks (DSBs), and in correlation with somatic hypermutation and immunoglobulin class-switch recombination. Phosphorylation at Ser-37 (H2BS36ph) by AMPK in response to stress promotes transcription. In terms of processing, glcNAcylation at Ser-113 promotes monoubiquitination of Lys-121. It fluctuates in response to extracellular glucose, and associates with transcribed genes. ADP-ribosylated by PARP1 or PARP2 on Ser-7 (H2BS6ADPr) in response to DNA damage. H2BS6ADPr promotes recruitment of CHD1L. Mono-ADP-ribosylated on Glu-3 (H2BE2ADPr) by PARP3 in response to single-strand breaks. Poly ADP-ribosylation on Glu-36 (H2BE35ADPr) by PARP1 regulates adipogenesis: it inhibits phosphorylation at Ser-37 (H2BS36ph), thereby blocking expression of pro-adipogenetic genes. Post-translationally, crotonylation (Kcr) is specifically present in male germ cells and marks testis-specific genes in post-meiotic cells, including X-linked genes that escape sex chromosome inactivation in haploid cells. Crotonylation marks active promoters and enhancers and confers resistance to transcriptional repressors. It is also associated with post-meiotically activated genes on autosomes. In terms of processing, lactylated in macrophages by EP300/P300 by using lactoyl-CoA directly derived from endogenous or exogenous lactate, leading to stimulates gene transcription.

The protein localises to the nucleus. Its subcellular location is the chromosome. Its function is as follows. Core component of nucleosome. Nucleosomes wrap and compact DNA into chromatin, limiting DNA accessibility to the cellular machineries which require DNA as a template. Histones thereby play a central role in transcription regulation, DNA repair, DNA replication and chromosomal stability. DNA accessibility is regulated via a complex set of post-translational modifications of histones, also called histone code, and nucleosome remodeling. The sequence is that of Histone H2B type 1-K from Macaca fascicularis (Crab-eating macaque).